The primary structure comprises 381 residues: Homoserine O-succinyltransferase (381 aa).

The 316-residue stretch at 45–360 (NAVLVCHALN…PHGHDAFLLD (316 aa)) folds into the AB hydrolase-1 domain. Ser151 (nucleophile) is an active-site residue. Substrate is bound at residue Arg221. Residues Asp321 and His354 contribute to the active site. Asp355 is a substrate binding site.

The protein belongs to the AB hydrolase superfamily. MetX family. In terms of assembly, homodimer.

It is found in the cytoplasm. It catalyses the reaction L-homoserine + succinyl-CoA = O-succinyl-L-homoserine + CoA. It functions in the pathway amino-acid biosynthesis; L-methionine biosynthesis via de novo pathway; O-succinyl-L-homoserine from L-homoserine: step 1/1. In terms of biological role, transfers a succinyl group from succinyl-CoA to L-homoserine, forming succinyl-L-homoserine. This Burkholderia lata (strain ATCC 17760 / DSM 23089 / LMG 22485 / NCIMB 9086 / R18194 / 383) protein is Homoserine O-succinyltransferase.